A 105-amino-acid polypeptide reads, in one-letter code: Large ribosomal subunit protein bL21 (105 aa).

This sequence belongs to the bacterial ribosomal protein bL21 family. In terms of assembly, part of the 50S ribosomal subunit. Contacts protein L20.

Its function is as follows. This protein binds to 23S rRNA in the presence of protein L20. The protein is Large ribosomal subunit protein bL21 of Rhizobium etli (strain ATCC 51251 / DSM 11541 / JCM 21823 / NBRC 15573 / CFN 42).